The sequence spans 390 residues: Cytochrome b (390 aa).

The next 4 membrane-spanning stretches (helical) occupy residues 32–52, 76–98, 113–133, and 179–199; these read MGSLLGLCLVIQILTGIFMAM, WFLRYAHANGASFFFICMYIHMG, LWTIGVIIFILTMATAFLGYC, and FFALHYLFPFVIAAVVIMHMM. Heme b is bound by residues histidine 82 and histidine 96. Histidine 183 and histidine 197 together coordinate heme b. An a ubiquinone-binding site is contributed by histidine 202. 4 consecutive transmembrane segments (helical) span residues 225–245, 289–309, 321–341, and 348–368; these read FVFKDLITVFVFLIVFSLFVF, LMGVITMFSAILVLLVLPFTD, LSKLFFFLFVFNFVLLGQIGA, and YILMGQISTFLYFAYFLVFIP.

It belongs to the cytochrome b family. Fungal cytochrome b-c1 complex contains 10 subunits; 3 respiratory subunits, 2 core proteins and 5 low-molecular weight proteins. Cytochrome b-c1 complex is a homodimer. Heme b is required as a cofactor.

The protein localises to the mitochondrion inner membrane. In terms of biological role, component of the ubiquinol-cytochrome c reductase complex (complex III or cytochrome b-c1 complex) that is part of the mitochondrial respiratory chain. The b-c1 complex mediates electron transfer from ubiquinol to cytochrome c. Contributes to the generation of a proton gradient across the mitochondrial membrane that is then used for ATP synthesis. The chain is Cytochrome b (COB) from Naumovozyma castellii (Yeast).